A 598-amino-acid polypeptide reads, in one-letter code: Elongation factor 4 (598 aa).

Residues 2–183 form the tr-type G domain; sequence KKIRNFCIIA…AIIEKIPPPK (182 aa). GTP-binding positions include 14 to 19 and 130 to 133; these read DHGKST and NKVD.

Belongs to the TRAFAC class translation factor GTPase superfamily. Classic translation factor GTPase family. LepA subfamily.

It is found in the cell inner membrane. It catalyses the reaction GTP + H2O = GDP + phosphate + H(+). Required for accurate and efficient protein synthesis under certain stress conditions. May act as a fidelity factor of the translation reaction, by catalyzing a one-codon backward translocation of tRNAs on improperly translocated ribosomes. Back-translocation proceeds from a post-translocation (POST) complex to a pre-translocation (PRE) complex, thus giving elongation factor G a second chance to translocate the tRNAs correctly. Binds to ribosomes in a GTP-dependent manner. This Flavobacterium johnsoniae (strain ATCC 17061 / DSM 2064 / JCM 8514 / BCRC 14874 / CCUG 350202 / NBRC 14942 / NCIMB 11054 / UW101) (Cytophaga johnsonae) protein is Elongation factor 4.